A 345-amino-acid polypeptide reads, in one-letter code: Histone H3-like centromeric protein cpar-1 (345 aa).

Residues 117 to 246 (NHSNRKPLEE…SRVTKTHNRK (130 aa)) form a disordered region. Basic and acidic residues predominate over residues 122 to 149 (KPLEESRRREEPRDRVHESNIDITHRGD). A compositionally biased stretch (basic residues) spans 233 to 246 (RSGKSRVTKTHNRK). Residues 263–340 (STDMLIQKAP…TDIQLYRRLC (78 aa)) form an H3-like region.

Belongs to the histone H3 family. In terms of assembly, forms a nucleosome-like histone octamer containing two molecules each of H2A, H2B, cpar-1 and H4 assembled in one cpar-1-H4 heterotetramer and two H2A-H2B heterodimers. In terms of processing, cleaved at the onset of meiotic anaphase I, likely by separase sep-1.

The protein localises to the nucleus. It localises to the chromosome. In terms of biological role, histone H3-like variant which exclusively replaces conventional H3 in the nucleosome core of centromeric chromatin at the inner plate of the kinetochore. Required for recruitment and assembly of kinetochore proteins, mitotic progression and chromosome segregation. May serve as an epigenetic mark that propagates centromere identity through replication and cell division. Not required for chromosome segregation during meiosis. This is Histone H3-like centromeric protein cpar-1 from Caenorhabditis briggsae.